The chain runs to 208 residues: NADH-ubiquinone oxidoreductase chain 4 (208 aa).

6 consecutive transmembrane segments (helical) span residues 23-43 (VWINVTSYSFVINMIALVTLW), 60-80 (SLSSPLTMLTIWLLPLMLLAS), 93-113 (KMYISLLITLQVLLIMTFSAN), 114-134 (ELIMFYILFEATLIPTLIIIT), 147-167 (LYFLFYTLIGSIPLLIALISI), and 188-208 (PTWSSHILWLACIMAFMIKMP).

It belongs to the complex I subunit 4 family. Core subunit of respiratory chain NADH dehydrogenase (Complex I) which is composed of 45 different subunits.

It localises to the mitochondrion inner membrane. The enzyme catalyses a ubiquinone + NADH + 5 H(+)(in) = a ubiquinol + NAD(+) + 4 H(+)(out). Core subunit of the mitochondrial membrane respiratory chain NADH dehydrogenase (Complex I) which catalyzes electron transfer from NADH through the respiratory chain, using ubiquinone as an electron acceptor. Essential for the catalytic activity and assembly of complex I. The chain is NADH-ubiquinone oxidoreductase chain 4 (MT-ND4) from Phodopus sungorus (Striped hairy-footed hamster).